The sequence spans 290 residues: Inner membrane protein YebZ (290 aa).

The Periplasmic portion of the chain corresponds to 1 to 10; sequence MLAFTWIALR. The chain crosses the membrane as a helical span at residues 11-31; it reads FIHFTSLMLVFGFAMYGAWLA. Residues 32 to 49 are Cytoplasmic-facing; the sequence is PLTIRRLLAKRFLRLQQH. The chain crosses the membrane as a helical span at residues 50 to 70; sequence AAVWSLISATAMLAVQGGLMG. At 71-89 the chain is on the periplasmic side; sequence TGWTDVFSPNIWQAVLQTQ. A helical transmembrane segment spans residues 90–110; sequence FGGIWLWQIVLALVTLIVALM. Topologically, residues 111–117 are cytoplasmic; sequence QPRNMPR. A helical membrane pass occupies residues 118 to 138; sequence LLFMLTTAQFILLAGVGHATL. The Periplasmic segment spans residues 139 to 151; it reads NEGVTAKIHQTNH. The helical transmembrane segment at 152 to 172 threads the bilayer; it reads AIHLICAAAWFGGLLPVLWCM. At 173–195 the chain is on the cytoplasmic side; that stretch reads QLIKGRWRHQAIQALMRFSWCGH. The helical transmembrane segment at 196–216 threads the bilayer; the sequence is FAVIGVLASGVLNALLITGFP. Residues 217 to 222 are Periplasmic-facing; sequence PTLTTY. The chain crosses the membrane as a helical span at residues 223–243; the sequence is WGQLLLLKAILVMIMVVIALA. Residues 244 to 260 lie on the Cytoplasmic side of the membrane; sequence NRYVLVPRMRQDEDRAA. The chain crosses the membrane as a helical span at residues 261–281; the sequence is PWFVWMTKLEWAIGAVVLVII. The Periplasmic segment spans residues 282–290; it reads SLLATLEPF.

The protein belongs to the CopD family.

Its subcellular location is the cell inner membrane. This is Inner membrane protein YebZ (yebZ) from Escherichia coli (strain K12).